Consider the following 194-residue polypeptide: Adenylate kinase isoenzyme 1 (194 aa).

The residue at position 1 (Met1) is an N-acetylmethionine. Position 18–23 (18–23 (GSGKGT)) interacts with ATP. Residue Ser38 is modified to Phosphoserine. Positions 38-67 (STGDLLRAEVSSGSARGKMLSEIMEKGQLV) are NMP. AMP-binding positions include Thr39, Arg44, 65–67 (QLV), 94–97 (GYPR), and Gln101. The LID stretch occupies residues 131 to 141 (KRGETSGRVDD). Arg132 is a binding site for ATP. Residues Arg138 and Arg149 each coordinate AMP. Gly177 is a binding site for ATP.

This sequence belongs to the adenylate kinase family. AK1 subfamily. In terms of assembly, monomer. Mg(2+) is required as a cofactor.

It is found in the cytoplasm. The catalysed reaction is a ribonucleoside 5'-phosphate + ATP = a ribonucleoside 5'-diphosphate + ADP. The enzyme catalyses AMP + ATP = 2 ADP. It catalyses the reaction dAMP + ATP = dADP + ADP. It carries out the reaction dATP + AMP = dADP + ADP. The catalysed reaction is dAMP + dATP = 2 dADP. The enzyme catalyses a 2'-deoxyribonucleoside 5'-diphosphate + ATP = a 2'-deoxyribonucleoside 5'-triphosphate + ADP. It catalyses the reaction a ribonucleoside 5'-diphosphate + ATP = a ribonucleoside 5'-triphosphate + ADP. It carries out the reaction CDP + GTP = CTP + GDP. The catalysed reaction is GDP + ATP = GTP + ADP. The enzyme catalyses UDP + ATP = UTP + ADP. It catalyses the reaction GTP + UDP = UTP + GDP. It carries out the reaction dTDP + GTP = dTTP + GDP. The catalysed reaction is dCDP + GTP = dCTP + GDP. The enzyme catalyses dGDP + ATP = dGTP + ADP. It catalyses the reaction dADP + GTP = dATP + GDP. It carries out the reaction thiamine diphosphate + ADP = thiamine triphosphate + AMP. Its function is as follows. Catalyzes the reversible transfer of the terminal phosphate group between ATP and AMP. Also displays broad nucleoside diphosphate kinase activity. Plays an important role in cellular energy homeostasis and in adenine nucleotide metabolism. Also catalyzes at a very low rate the synthesis of thiamine triphosphate (ThTP) from thiamine diphosphate (ThDP) and ADP. In Sus scrofa (Pig), this protein is Adenylate kinase isoenzyme 1.